The following is a 377-amino-acid chain: Protein-arginine rhamnosyltransferase (377 aa).

Residue tyrosine 15 participates in dTDP-beta-L-rhamnose binding. The active-site Proton acceptor is aspartate 17. Residues tyrosine 193, glutamine 255, and 271-275 (RGEDS) contribute to the dTDP-beta-L-rhamnose site. Glutamate 273 is a catalytic residue.

This sequence belongs to the glycosyltransferase 104 family.

The enzyme catalyses dTDP-beta-L-rhamnose + L-arginyl-[protein] = N(omega)-(alpha-L-rhamnosyl)-L-arginyl-[protein] + dTDP + H(+). Functionally, protein-arginine rhamnosyltransferase that catalyzes the transfer of a single rhamnose to elongation factor P (EF-P) on 'Lys-32', a modification required for EF-P-dependent rescue of polyproline stalled ribosomes. This chain is Protein-arginine rhamnosyltransferase, found in Pseudomonas putida (strain ATCC 47054 / DSM 6125 / CFBP 8728 / NCIMB 11950 / KT2440).